The sequence spans 175 residues: uncharacterized protein (175 aa).

This is an uncharacterized protein from Archaeoglobus fulgidus (strain ATCC 49558 / DSM 4304 / JCM 9628 / NBRC 100126 / VC-16).